We begin with the raw amino-acid sequence, 250 residues long: Large ribosomal subunit protein uL30B (250 aa).

The protein belongs to the universal ribosomal protein uL30 family. In terms of assembly, component of the large ribosomal subunit (LSU). Mature yeast ribosomes consist of a small (40S) and a large (60S) subunit. The 40S small subunit contains 1 molecule of ribosomal RNA (18S rRNA) and at least 33 different proteins. The large 60S subunit contains 3 rRNA molecules (25S, 5.8S and 5S rRNA) and at least 46 different proteins.

It is found in the cytoplasm. The protein resides in the nucleus. It localises to the nucleolus. Component of the ribosome, a large ribonucleoprotein complex responsible for the synthesis of proteins in the cell. The small ribosomal subunit (SSU) binds messenger RNAs (mRNAs) and translates the encoded message by selecting cognate aminoacyl-transfer RNA (tRNA) molecules. The large subunit (LSU) contains the ribosomal catalytic site termed the peptidyl transferase center (PTC), which catalyzes the formation of peptide bonds, thereby polymerizing the amino acids delivered by tRNAs into a polypeptide chain. The nascent polypeptides leave the ribosome through a tunnel in the LSU and interact with protein factors that function in enzymatic processing, targeting, and the membrane insertion of nascent chains at the exit of the ribosomal tunnel. This Schizosaccharomyces pombe (strain 972 / ATCC 24843) (Fission yeast) protein is Large ribosomal subunit protein uL30B (rpl702).